The primary structure comprises 183 residues: UPF0398 protein MCCL_1095 (183 aa).

Belongs to the UPF0398 family.

This Macrococcus caseolyticus (strain JCSC5402) (Macrococcoides caseolyticum) protein is UPF0398 protein MCCL_1095.